Consider the following 297-residue polypeptide: Homoserine kinase (297 aa).

82–92 (PLTRGLGSSAS) is a binding site for ATP.

The protein belongs to the GHMP kinase family. Homoserine kinase subfamily.

The protein resides in the cytoplasm. It carries out the reaction L-homoserine + ATP = O-phospho-L-homoserine + ADP + H(+). Its pathway is amino-acid biosynthesis; L-threonine biosynthesis; L-threonine from L-aspartate: step 4/5. Its function is as follows. Catalyzes the ATP-dependent phosphorylation of L-homoserine to L-homoserine phosphate. This is Homoserine kinase from Bacillus cereus (strain ATCC 10987 / NRS 248).